A 226-amino-acid polypeptide reads, in one-letter code: UPF0758 protein GK2618 (226 aa).

Residues 104–226 (VIRCPEDGAK…FISLKEKGYV (123 aa)) enclose the MPN domain. Residues His-175, His-177, and Asp-188 each coordinate Zn(2+). Positions 175–188 (HNHPSGDPTPSRED) match the JAMM motif motif.

Belongs to the UPF0758 family.

This chain is UPF0758 protein GK2618, found in Geobacillus kaustophilus (strain HTA426).